Reading from the N-terminus, the 452-residue chain is Elongation factor Tu, mitochondrial (452 aa).

Residues 1-43 (MAAATLLRATPRFSGLCASPTPFLQGRLRPLKAPASPFLCRGL) constitute a mitochondrion transit peptide. Residues 55–251 (KPHVNVGTIG…AVDTYIPVPT (197 aa)) enclose the tr-type G domain. The tract at residues 64-71 (GHVDHGKT) is G1. GTP-binding residues include Asp-67, Gly-69, Lys-70, Thr-71, and Thr-72. Thr-71 serves as a coordination point for Mg(2+). Lys-79 is subject to N6-acetyllysine. Lys-88 is subject to N6-acetyllysine; alternate. N6-succinyllysine; alternate is present on Lys-88. The tract at residues 105–109 (GITIN) is G2. The G3 stretch occupies residues 126–129 (DCPG). Residues Asn-181, Asp-184, Ser-219, Ala-220, and Leu-221 each contribute to the GTP site. Positions 181-184 (NKAD) are G4. The interval 219-221 (SAL) is G5. An N6-succinyllysine modification is found at Lys-234. Lys-256 carries the post-translational modification N6-acetyllysine. Thr-278 carries the phosphothreonine modification. Lys-286 carries the N6-succinyllysine modification. Ser-312 is modified (phosphoserine). N6-acetyllysine is present on residues Lys-361 and Lys-418.

Belongs to the TRAFAC class translation factor GTPase superfamily. Classic translation factor GTPase family. EF-Tu/EF-1A subfamily. In terms of assembly, interacts with NLRX1. Interacts with ATG16L1.

It is found in the mitochondrion. It carries out the reaction GTP + H2O = GDP + phosphate + H(+). Its function is as follows. GTP hydrolase that promotes the GTP-dependent binding of aminoacyl-tRNA to the A-site of ribosomes during protein biosynthesis. Plays a role in the regulation of autophagy and innate immunity. Recruits ATG5-ATG12 and NLRX1 at mitochondria and serves as a checkpoint of the RIGI-MAVS pathway. In turn, inhibits RLR-mediated type I interferon while promoting autophagy. The chain is Elongation factor Tu, mitochondrial from Rattus norvegicus (Rat).